Reading from the N-terminus, the 280-residue chain is Putative pyruvate, phosphate dikinase regulatory protein (280 aa).

An ADP-binding site is contributed by 154–161; it reads GVSRTSKT.

Belongs to the pyruvate, phosphate/water dikinase regulatory protein family. PDRP subfamily.

The catalysed reaction is N(tele)-phospho-L-histidyl/L-threonyl-[pyruvate, phosphate dikinase] + ADP = N(tele)-phospho-L-histidyl/O-phospho-L-threonyl-[pyruvate, phosphate dikinase] + AMP + H(+). It carries out the reaction N(tele)-phospho-L-histidyl/O-phospho-L-threonyl-[pyruvate, phosphate dikinase] + phosphate + H(+) = N(tele)-phospho-L-histidyl/L-threonyl-[pyruvate, phosphate dikinase] + diphosphate. Functionally, bifunctional serine/threonine kinase and phosphorylase involved in the regulation of the pyruvate, phosphate dikinase (PPDK) by catalyzing its phosphorylation/dephosphorylation. This chain is Putative pyruvate, phosphate dikinase regulatory protein, found in Nitrobacter hamburgensis (strain DSM 10229 / NCIMB 13809 / X14).